A 362-amino-acid chain; its full sequence is UDP-N-acetylglucosamine--N-acetylmuramyl-(pentapeptide) pyrophosphoryl-undecaprenol N-acetylglucosamine transferase (362 aa).

Residues 15-17, asparagine 127, arginine 165, serine 191, isoleucine 247, 266-271, and glutamine 292 each bind UDP-N-acetyl-alpha-D-glucosamine; these read TGG and ALTVSE.

It belongs to the glycosyltransferase 28 family. MurG subfamily.

It localises to the cell inner membrane. It carries out the reaction di-trans,octa-cis-undecaprenyl diphospho-N-acetyl-alpha-D-muramoyl-L-alanyl-D-glutamyl-meso-2,6-diaminopimeloyl-D-alanyl-D-alanine + UDP-N-acetyl-alpha-D-glucosamine = di-trans,octa-cis-undecaprenyl diphospho-[N-acetyl-alpha-D-glucosaminyl-(1-&gt;4)]-N-acetyl-alpha-D-muramoyl-L-alanyl-D-glutamyl-meso-2,6-diaminopimeloyl-D-alanyl-D-alanine + UDP + H(+). It participates in cell wall biogenesis; peptidoglycan biosynthesis. Cell wall formation. Catalyzes the transfer of a GlcNAc subunit on undecaprenyl-pyrophosphoryl-MurNAc-pentapeptide (lipid intermediate I) to form undecaprenyl-pyrophosphoryl-MurNAc-(pentapeptide)GlcNAc (lipid intermediate II). This chain is UDP-N-acetylglucosamine--N-acetylmuramyl-(pentapeptide) pyrophosphoryl-undecaprenol N-acetylglucosamine transferase, found in Shewanella sp. (strain MR-4).